The chain runs to 1008 residues: Collagen alpha-1(I) chain (1008 aa).

The segment at 1 to 1008 (GGISVPGPMG…PGPPGPPGPP (1008 aa)) is disordered. 11 positions are modified to 4-hydroxyproline: Pro18, Pro21, Pro23, Pro32, Pro35, Pro38, Pro52, Pro67, Pro73, Pro82, and Pro88. Positions 55-69 (NGDDGEAGKPGRPGE) are enriched in basic and acidic residues. Lys91 is modified (5-hydroxylysine; alternate). A glycan (O-linked (Gal...) hydroxylysine; alternate) is linked at Lys91. Position 97 is a phosphoserine (Ser97). Over residues 105–121 (DAGPAGPKGEPGSPGEN) the composition is skewed to low complexity. Residues Pro115, Pro118, Pro124, Pro133, Pro139, Pro160, Pro169, Pro172, Pro199, Pro202, Pro214, Pro220, Pro229, Pro235, and Pro238 each carry the 4-hydroxyproline modification. Low complexity predominate over residues 139–157 (PGASGPAGARGNDGAAGAA). The segment covering 159 to 171 (PPGPTGPAGPPGF) has biased composition (pro residues). Over residues 205-235 (AGAAGPAGNPGADGQPGAKGANGAPGIAGAP) the composition is skewed to low complexity. Positions 236–255 (GFPGRGPSGPQGPSGPGPKG) are enriched in gly residues. At Lys254 the chain carries 5-hydroxylysine. Pro260, Pro263, Pro275, Pro284, Pro299, Pro305, Pro314, and Pro320 each carry 4-hydroxyproline. The segment covering 309–318 (GERGGPGSRG) has biased composition (gly residues). At Lys329 the chain carries 5-hydroxylysine. A 4-hydroxyproline mark is found at Pro338, Pro347, Pro353, Pro359, Pro368, Pro371, Pro380, Pro389, Pro395, Pro407, Pro416, Pro425, Pro428, Pro446, Pro463, Pro469, Pro475, Pro481, Pro487, Pro493, Pro505, Pro514, Pro523, Pro535, Pro538, Pro544, Pro550, and Pro559. The segment covering 362-388 (KGLTGSPGSPGPDGKTGPPGPAGQDGR) has biased composition (low complexity). The span at 397 to 416 (ARGQAGVMGFPGPKGAAGEP) shows a compositional bias: low complexity. A compositionally biased stretch (low complexity) spans 475 to 484 (PGEAGKPGEQ). The span at 519–547 (PRGAPGNDGAKGDAGAPGAPGSQGAPGLQ) shows a compositional bias: low complexity. Lys571 carries the 5-hydroxylysine modification. Pro577, Pro592, and Pro598 each carry 4-hydroxyproline. Over residues 604–618 (SGPSGPAGPTGARGA) the composition is skewed to low complexity. The residue at position 607 (Ser607) is a Phosphoserine. A 4-hydroxyproline mark is found at Pro619, Pro625, Pro628, Pro637, Pro643, Pro661, Pro670, and Pro679. The span at 631 to 658 (AGFAGPPGADGQPGAKGEPGDAGAKGDA) shows a compositional bias: low complexity. Over residues 660–672 (PPGPAGPTGPPGP) the composition is skewed to pro residues. Position 682 is a 5-hydroxylysine (Lys682). Positions 687 to 703 (SAGPPGATGFPGAAGRV) are enriched in low complexity. Residues Pro691 and Pro697 each carry the 4-hydroxyproline modification. Pro705 is modified (3-hydroxyproline). Pro706, Pro717, Pro738, Pro747, Pro755, Pro764, Pro781, Pro790, Pro793, Pro799, Pro814, Pro820, Pro826, Pro835, and Pro841 each carry 4-hydroxyproline. Over residues 731–740 (ETGPAGRPGE) the composition is skewed to low complexity. Residues 752–764 (KGSPGADGPAGAP) are compositionally biased toward low complexity. Pro residues predominate over residues 813 to 823 (PPGPVGPPGLA). Low complexity predominate over residues 825–840 (PPGESGREGSPGAEGS). At Lys850 the chain carries 5-hydroxylysine. Residues 858–873 (PGPPGAPGAPGAPGPV) show a composition bias toward pro residues. Residues Pro861, Pro864, and Pro867 each carry the 4-hydroxyproline modification. Positions 894–908 (AGPAGARGPAGPQGP) are enriched in low complexity. Residues 909-923 (RGDKGETGEQGDRGI) show a composition bias toward basic and acidic residues. Residue Lys912 is modified to 5-hydroxylysine. At Lys924 the chain carries 5-hydroxylysine; alternate. A glycan (O-linked (Gal...) hydroxylysine; alternate) is linked at Lys924. A 4-hydroxyproline mark is found at Pro939, Pro942, Pro960, and Pro975. Residues 942–975 (PGEQGPSGASGPAGPRGPPGSAGSPGKDGLNGLP) show a composition bias toward low complexity. Pro980 carries the post-translational modification 3-hydroxyproline. At Pro981 the chain carries 4-hydroxyproline. Pro residues predominate over residues 993-1008 (VGPPGPPGPPGPPGPP). Pro995 is subject to 3-hydroxyproline. Position 996 is a 4-hydroxyproline (Pro996). Position 998 is a 3-hydroxyproline (Pro998). At Pro999 the chain carries 4-hydroxyproline. At Pro1001 the chain carries 3-hydroxyproline. Residues Pro1002, Pro1005, and Pro1008 each carry the 4-hydroxyproline modification.

Belongs to the fibrillar collagen family. Trimers of one alpha 2(I) and two alpha 1(I) chains. Post-translationally, contains mostly 4-hydroxyproline. Proline residues at the third position of the tripeptide repeating unit (G-X-Y) are hydroxylated in some or all of the chains. In terms of processing, contains 3-hydroxyproline at a few sites. This modification occurs on the first proline residue in the sequence motif Gly-Pro-Hyp, where Hyp is 4-hydroxyproline. Lysine residues at the third position of the tripeptide repeating unit (G-X-Y) are 5-hydroxylated in some or all of the chains. Post-translationally, O-glycosylated on hydroxylated lysine residues. The O-linked glycan consists of a Glc-Gal disaccharide. As to expression, expressed in bones.

The protein localises to the secreted. It is found in the extracellular space. It localises to the extracellular matrix. Type I collagen is a member of group I collagen (fibrillar forming collagen). The chain is Collagen alpha-1(I) chain from Paramylodon harlani (Harlan's ground sloth).